Consider the following 124-residue polypeptide: Large-conductance mechanosensitive channel (124 aa).

2 helical membrane-spanning segments follow: residues 15 to 35 (MDLA…NSLV) and 67 to 87 (GSFL…FFLI).

This sequence belongs to the MscL family. As to quaternary structure, homopentamer.

It localises to the cell membrane. Functionally, channel that opens in response to stretch forces in the membrane lipid bilayer. May participate in the regulation of osmotic pressure changes within the cell. The chain is Large-conductance mechanosensitive channel from Lactobacillus johnsonii (strain CNCM I-12250 / La1 / NCC 533).